A 105-amino-acid chain; its full sequence is dATP/dGTP diphosphohydrolase (105 aa).

The protein belongs to the Caudovirales dATP/dGTP diphosphohydrolase family. It depends on Co(2+) as a cofactor.

It carries out the reaction dGTP + H2O = dGMP + diphosphate + H(+). The enzyme catalyses dATP + H2O = dAMP + diphosphate + H(+). The protein operates within purine metabolism. In terms of biological role, catalyzes the hydrolysis of dGTP into dGMP, which is needed among other for the first step of biosynthesis of dZTP (2-amino-2'-deoxyadenosine-5'-triphosphate). The chain is dATP/dGTP diphosphohydrolase from Cyanophage S-2L (Cyanobacteria phage S-2L).